The following is a 486-amino-acid chain: ATP synthase subunit beta (486 aa).

Residue 164 to 171 (GGAGVGKT) coordinates ATP.

The protein belongs to the ATPase alpha/beta chains family. In terms of assembly, F-type ATPases have 2 components, CF(1) - the catalytic core - and CF(0) - the membrane proton channel. CF(1) has five subunits: alpha(3), beta(3), gamma(1), delta(1), epsilon(1). CF(0) has four main subunits: a(1), b(1), b'(1) and c(9-12).

The protein resides in the cellular thylakoid membrane. The enzyme catalyses ATP + H2O + 4 H(+)(in) = ADP + phosphate + 5 H(+)(out). Produces ATP from ADP in the presence of a proton gradient across the membrane. The catalytic sites are hosted primarily by the beta subunits. In Prochlorococcus marinus (strain MIT 9312), this protein is ATP synthase subunit beta.